A 208-amino-acid chain; its full sequence is Methyl-CpG-binding domain protein 3-like 2 (208 aa).

The tract at residues 1–89 is interacts with MBD3; it reads MGEPAFTSFP…HLEKPQQLCA (89 aa).

Belongs to the MBD3L family. In terms of assembly, interacts (via N-terminus) with MBD3; the interaction is direct. Interacts with MTA1. Interacts with HDAC1. Interacts with HDAC2. Interacts with RBBP4. Interacts with RBBP7. Detected at low levels in several somatic tissues. Highly expressed in the ovarian teratocarcinoma cell line PA-1.

The protein localises to the nucleus. Functionally, may displace the NuRD complex from chromatin. The protein is Methyl-CpG-binding domain protein 3-like 2 (MBD3L2) of Homo sapiens (Human).